A 47-amino-acid chain; its full sequence is Large ribosomal subunit protein bL34 (47 aa).

This sequence belongs to the bacterial ribosomal protein bL34 family.

The protein is Large ribosomal subunit protein bL34 of Rhodococcus opacus (strain B4).